Consider the following 510-residue polypeptide: Maturase K (510 aa).

Belongs to the intron maturase 2 family. MatK subfamily.

It is found in the plastid. Usually encoded in the trnK tRNA gene intron. Probably assists in splicing its own and other chloroplast group II introns. The sequence is that of Maturase K from Aneura mirabilis (Parasitic liverwort).